We begin with the raw amino-acid sequence, 219 residues long: 2-hydroxy-3-keto-5-methylthiopentenyl-1-phosphate phosphatase (219 aa).

The protein belongs to the HAD-like hydrolase superfamily. MtnX family.

It catalyses the reaction 2-hydroxy-5-methylsulfanyl-3-oxopent-1-enyl phosphate + H2O = 1,2-dihydroxy-5-(methylsulfanyl)pent-1-en-3-one + phosphate. Its pathway is amino-acid biosynthesis; L-methionine biosynthesis via salvage pathway; L-methionine from S-methyl-5-thio-alpha-D-ribose 1-phosphate: step 4/6. Dephosphorylates 2-hydroxy-3-keto-5-methylthiopentenyl-1-phosphate (HK-MTPenyl-1-P) yielding 1,2-dihydroxy-3-keto-5-methylthiopentene (DHK-MTPene). In Bacillus cereus (strain ATCC 14579 / DSM 31 / CCUG 7414 / JCM 2152 / NBRC 15305 / NCIMB 9373 / NCTC 2599 / NRRL B-3711), this protein is 2-hydroxy-3-keto-5-methylthiopentenyl-1-phosphate phosphatase.